Reading from the N-terminus, the 23-residue chain is Cardioactive peptide CAP23 (23 aa).

Cys7 and Cys19 are joined by a disulfide.

It belongs to the GBP/PSP1/paralytic peptide family.

In terms of biological role, has excitatory effects on a semi-isolated heart from larval Manduca sexta, causing an inotropic effect at low concentrations of peptide and chronotropic and inotropic effects at high doses. The polypeptide is Cardioactive peptide CAP23 (Spodoptera eridania (Southern armyworm)).